The chain runs to 437 residues: Glutamate-1-semialdehyde 2,1-aminomutase (437 aa).

Lys-277 carries the post-translational modification N6-(pyridoxal phosphate)lysine.

This sequence belongs to the class-III pyridoxal-phosphate-dependent aminotransferase family. HemL subfamily. In terms of assembly, homodimer. Requires pyridoxal 5'-phosphate as cofactor.

It localises to the cytoplasm. It catalyses the reaction (S)-4-amino-5-oxopentanoate = 5-aminolevulinate. It functions in the pathway porphyrin-containing compound metabolism; protoporphyrin-IX biosynthesis; 5-aminolevulinate from L-glutamyl-tRNA(Glu): step 2/2. Its pathway is porphyrin-containing compound metabolism; chlorophyll biosynthesis. In Thermosynechococcus vestitus (strain NIES-2133 / IAM M-273 / BP-1), this protein is Glutamate-1-semialdehyde 2,1-aminomutase.